The sequence spans 214 residues: Anti-sigma-F factor NrsF (214 aa).

The Cytoplasmic segment spans residues 1–25; the sequence is MRTDDLIDALAADAGRGTEPAPPRR. The helical transmembrane segment at 26-46 threads the bilayer; the sequence is LALVAGLGGVAALLLVLGWLQ. Residues 47–53 are Periplasmic-facing; it reads ARPDLGQ. A helical transmembrane segment spans residues 54 to 74; the sequence is AILGPMFWVKAIYTGLLGLAG. Over 75-90 the chain is Cytoplasmic; it reads YLAVERLSRPGGSGRR. The helical transmembrane segment at 91-111 threads the bilayer; the sequence is GWIIGAVVFGACAVAGIYQAI. The Periplasmic portion of the chain corresponds to 112–134; sequence TSPDVQAALKLLHGYSWRSCSPR. A helical transmembrane segment spans residues 135 to 155; that stretch reads ILVLGLPMLALGLWALRGMAP. The Cytoplasmic portion of the chain corresponds to 156–158; that stretch reads TRP. The chain crosses the membrane as a helical span at residues 159-179; the sequence is GLAGFAMGLFSGGVVATLYGL. Over 180–185 the chain is Periplasmic; that stretch reads HCPEHT. The helical transmembrane segment at 186–206 threads the bilayer; it reads FTFLALWYSLGVLALGLIGGW. Topologically, residues 207–214 are cytoplasmic; it reads AGRWLLRW.

It belongs to the NrsF anti-sigma-F factor family.

The protein resides in the cell inner membrane. In terms of biological role, an anti-sigma factor for extracytoplasmic function (ECF) sigma factor sigma-F (SigF), which responds to chromate and cadmium. Overexpression leads to loss of response to dichromate. ECF sigma factors are held in an inactive form by a cognate anti-sigma factor. The protein is Anti-sigma-F factor NrsF of Caulobacter vibrioides (strain NA1000 / CB15N) (Caulobacter crescentus).